Consider the following 30-residue polypeptide: Protein ScvA (30 aa).

The disordered stretch occupies residues 1-30 (MERQNVQQQRGKDQRPQRPGASNPRRPNQR).

In terms of biological role, might be involved in DNA-binding; the protein binds DNA in gel-shift assays and immunogold electron microscopy shows labelling of condensed chromatin. The chain is Protein ScvA (scvA) from Coxiella burnetii (strain RSA 493 / Nine Mile phase I).